A 176-amino-acid polypeptide reads, in one-letter code: Disulfide bond formation protein B (176 aa).

Residues 1–14 (MLRFLNQCSQGRGA) are Cytoplasmic-facing. A helical transmembrane segment spans residues 15 to 31 (WLLMAFTALALELTALW). The Periplasmic segment spans residues 32–49 (FQHVMLLKPCVLCIYERC). A disulfide bond links C41 and C44. Residues 50–65 (ALFGVLGAALIGAIAP) traverse the membrane as a helical segment. Topologically, residues 66 to 71 (KTPLRY) are cytoplasmic. The chain crosses the membrane as a helical span at residues 72 to 89 (VAMVIWLYSAFRGVQLTY). At 90 to 144 (EHTMLQLYPSPFATCDFMARFPEWLPLDKWVPQVFVASGDCAERQWEFLGLEMPQ) the chain is on the periplasmic side. A disulfide bond links C104 and C130. Residues 145–163 (WLLGIFIAYLIVAVLVVIS) traverse the membrane as a helical segment. Over 164 to 176 (QPFKAKKRDLFGR) the chain is Cytoplasmic.

This sequence belongs to the DsbB family.

It is found in the cell inner membrane. Functionally, required for disulfide bond formation in some periplasmic proteins. Acts by oxidizing the DsbA protein. This Escherichia coli O1:K1 / APEC protein is Disulfide bond formation protein B.